A 125-amino-acid polypeptide reads, in one-letter code: UPF0251 protein Dhaf_1981 (125 aa).

This sequence belongs to the UPF0251 family.

In Desulfitobacterium hafniense (strain DSM 10664 / DCB-2), this protein is UPF0251 protein Dhaf_1981.